The following is a 555-amino-acid chain: Dihydroxy-acid dehydratase (555 aa).

Aspartate 78 serves as a coordination point for Mg(2+). Cysteine 119 provides a ligand contact to [2Fe-2S] cluster. Mg(2+)-binding residues include aspartate 120 and lysine 121. Position 121 is an N6-carboxylysine (lysine 121). Cysteine 191 is a [2Fe-2S] cluster binding site. Position 444 (glutamate 444) interacts with Mg(2+). Serine 470 functions as the Proton acceptor in the catalytic mechanism.

The protein belongs to the IlvD/Edd family. In terms of assembly, homodimer. It depends on [2Fe-2S] cluster as a cofactor. The cofactor is Mg(2+).

It catalyses the reaction (2R)-2,3-dihydroxy-3-methylbutanoate = 3-methyl-2-oxobutanoate + H2O. The enzyme catalyses (2R,3R)-2,3-dihydroxy-3-methylpentanoate = (S)-3-methyl-2-oxopentanoate + H2O. The protein operates within amino-acid biosynthesis; L-isoleucine biosynthesis; L-isoleucine from 2-oxobutanoate: step 3/4. It functions in the pathway amino-acid biosynthesis; L-valine biosynthesis; L-valine from pyruvate: step 3/4. Its function is as follows. Functions in the biosynthesis of branched-chain amino acids. Catalyzes the dehydration of (2R,3R)-2,3-dihydroxy-3-methylpentanoate (2,3-dihydroxy-3-methylvalerate) into 2-oxo-3-methylpentanoate (2-oxo-3-methylvalerate) and of (2R)-2,3-dihydroxy-3-methylbutanoate (2,3-dihydroxyisovalerate) into 2-oxo-3-methylbutanoate (2-oxoisovalerate), the penultimate precursor to L-isoleucine and L-valine, respectively. The chain is Dihydroxy-acid dehydratase from Nitratidesulfovibrio vulgaris (strain DSM 19637 / Miyazaki F) (Desulfovibrio vulgaris).